Reading from the N-terminus, the 39-residue chain is Omega-theraphotoxin-Ba1a (39 aa).

3 disulfides stabilise this stretch: Cys-4-Cys-25, Cys-8-Cys-31, and Cys-17-Cys-36.

It belongs to the neurotoxin 12 (Hwtx-2) family. 06 (TXP1) subfamily. In terms of tissue distribution, expressed by the venom gland.

The protein resides in the secreted. Inhibits voltage-gated calcium channels (Cav) in rat cerebellar granule cells. Has insecticidal activity to crickets (Acheta domesticus). Is not toxic to mice. The polypeptide is Omega-theraphotoxin-Ba1a (Brachypelma albiceps (Mexican golden redrump tarantula)).